Reading from the N-terminus, the 396-residue chain is Phosphoglycerate kinase (396 aa).

Substrate-binding positions include 21 to 23 (DFN), Arg-36, 59 to 62 (HLGR), Arg-118, and Arg-151. ATP is bound by residues Lys-201, Gly-292, Glu-323, and 349-352 (GGDS).

Belongs to the phosphoglycerate kinase family. As to quaternary structure, monomer.

It is found in the cytoplasm. The enzyme catalyses (2R)-3-phosphoglycerate + ATP = (2R)-3-phospho-glyceroyl phosphate + ADP. It functions in the pathway carbohydrate degradation; glycolysis; pyruvate from D-glyceraldehyde 3-phosphate: step 2/5. This Leptospira borgpetersenii serovar Hardjo-bovis (strain L550) protein is Phosphoglycerate kinase.